Here is a 107-residue protein sequence, read N- to C-terminus: Toluene 1,2-dioxygenase system ferredoxin subunit (107 aa).

The Rieske domain maps to 4–99 (TYILRQGDLP…IKVEGDEVHV (96 aa)). [2Fe-2S] cluster-binding residues include Cys-43, His-45, Cys-62, and His-65.

Belongs to the bacterial ring-hydroxylating dioxygenase ferredoxin component family. This dioxygenase system consists of four proteins: the two subunits of the hydroxylase component (todC1 and todC2), a ferredoxin (TodB) and a ferredoxin reductase (TodA).

It participates in xenobiotic degradation; toluene degradation. Its function is as follows. This protein seems to be a 2Fe-2S ferredoxin. The protein is Toluene 1,2-dioxygenase system ferredoxin subunit (todB) of Pseudomonas putida (strain ATCC 700007 / DSM 6899 / JCM 31910 / BCRC 17059 / LMG 24140 / F1).